Reading from the N-terminus, the 905-residue chain is Coatomer subunit beta' (905 aa).

WD repeat units lie at residues 13–52, 55–94, 97–136, 140–180, 183–224, 227–266, 350–388, and 390–425; these read ARSD…LVKT, VCDL…RVHM, AHSD…SCSQ, GHTH…PNFT, GHEK…CVQT, GHAQ…LEST, SCEI…NKSF, and SAQE…KSFK. The residue at position 627 (Lys-627) is an N6-acetyllysine. One copy of the WD 9 repeat lies at 746–783; the sequence is IRTGRLPEAAFLARTYLPSQVSRVVKLWRENLSKVNQK. The disordered stretch occupies residues 837-873; sequence EEAKGFQPSRPTAQQEPDGKPASSPVIMASQTTHKEE. Ser-859 carries the phosphoserine modification. Residues 867-891 adopt a coiled-coil conformation; it reads QTTHKEEKSLLELEVDLDNLELEDI.

It belongs to the WD repeat COPB2 family. As to quaternary structure, oligomeric complex that consists of at least the alpha, beta, beta', gamma, delta, epsilon and zeta subunits. Probably interacts with PEX11A. Interacts with SCYL1. Interacts with JAGN1.

It is found in the cytoplasm. Its subcellular location is the cytosol. The protein resides in the golgi apparatus membrane. It localises to the cytoplasmic vesicle. The protein localises to the COPI-coated vesicle membrane. Functionally, the coatomer is a cytosolic protein complex that binds to dilysine motifs and reversibly associates with Golgi non-clathrin-coated vesicles, which further mediate biosynthetic protein transport from the ER, via the Golgi up to the trans Golgi network. Coatomer complex is required for budding from Golgi membranes, and is essential for the retrograde Golgi-to-ER transport of dilysine-tagged proteins. In mammals, the coatomer can only be recruited by membranes associated to ADP-ribosylation factors (ARFs), which are small GTP-binding proteins; the complex also influences the Golgi structural integrity, as well as the processing, activity, and endocytic recycling of LDL receptors. This coatomer complex protein, essential for Golgi budding and vesicular trafficking, is a selective binding protein (RACK) for protein kinase C, epsilon type. It binds to Golgi membranes in a GTP-dependent manner. The protein is Coatomer subunit beta' (Copb2) of Mus musculus (Mouse).